The sequence spans 158 residues: Antitoxin TacA (158 aa).

It belongs to the TacA antitoxin family. In terms of assembly, forms a complex with cognate toxin TacT.

Its function is as follows. Antitoxin component of a type II toxin-antitoxin (TA) system. Counteracts the toxic effect of cognate toxin TacT. In terms of biological role, tacA-TacT both represses and derepresses expression of its own operon. The chain is Antitoxin TacA from Mycobacterium tuberculosis (strain ATCC 25618 / H37Rv).